The sequence spans 99 residues: MGGVENPVSTDKAIRLPERKQYSSNAEPNPSKTEVKRRIERFPRVRIVAINSHRLPAGAARGSAGSVTGRRVRRKRMITTLRLNHPIPLFPGKQNGFVS.

The disordered stretch occupies residues 1–37 (MGGVENPVSTDKAIRLPERKQYSSNAEPNPSKTEVKR). Basic and acidic residues predominate over residues 12–21 (KAIRLPERKQ). Polar residues predominate over residues 22–32 (YSSNAEPNPSK).

The protein belongs to the universal ribosomal protein uL23 family. Part of the 50S ribosomal subunit.

It localises to the plastid. The protein localises to the chloroplast. Its function is as follows. Binds to 23S rRNA. This is Large ribosomal subunit protein uL23cz/uL23cy (rpl23-A) from Selaginella uncinata (Blue spike-moss).